A 462-amino-acid chain; its full sequence is Cysteine proteinase RD21A (462 aa).

The N-terminal stretch at 1-21 is a signal peptide; it reads MGFLKPTMAILFLAMVAVSSA. The propeptide at 22-136 is activation peptide; sequence VDMSIISYDE…LRYEARVGDE (115 aa). A glycan (N-linked (GlcNAc...) asparagine) is linked at Asn90. Intrachain disulfides connect Cys158–Cys200, Cys192–Cys233, Cys291–Cys342, Cys375–Cys387, and Cys381–Cys402. Cys161 is an active-site residue. Catalysis depends on residues His297 and Asn317. A propeptide spans 353-462 (removed in mature form); it reads KNGENPPNPG…FWSQGRKNIA (110 aa). Asn414 carries an N-linked (GlcNAc...) asparagine glycan.

This sequence belongs to the peptidase C1 family. As to quaternary structure, interacts with SERPIN1. Interacts with PRN2. Interacts with WSCP. Interacts with TZF4, TZF5 and TZF6.

It is found in the vacuole. The protein localises to the golgi apparatus. The protein resides in the cytoplasm. It localises to the stress granule. Its subcellular location is the P-body. Inhibited by the cysteine protease inhibitor E64 (L-trans-epoxysuccinyl-leucylamide-(4-guanido)-butane). Its function is as follows. Cysteine protease that plays a role in immunity, senescence, and biotic and abiotic stresses. Involved in immunity against the necrotrophic fungal pathogen Botrytis cinerea. Involved in elicitor-stimulated programmed cell death (PCD). During infection by the necrotrophic fungal pathogen Botrytis cinerea, functions as a PCD-promoting protease that is released from the ER body or vacuole to the cytoplasm. Accumulates in endoplasmic reticulum-derived bodies in epidermal cells and may participate in cell death in stressed or injured cells. Involved in water stress-induced cell death through its protease activity that is released to the cytoplasm after vacuolar collapse. Possesses protease activity in vitro and is involved in cell death in the transmitting tract and septum epidermis during flower development. Possesses peptide ligase activity. Can ligate peptides to unmodified N-termini of acceptor proteins. Probably ligates through a thioester intermediate. The sequence is that of Cysteine proteinase RD21A from Arabidopsis thaliana (Mouse-ear cress).